Here is a 458-residue protein sequence, read N- to C-terminus: Elongation factor 1-alpha (458 aa).

A N,N,N-trimethylglycine modification is found at G2. K3 bears the N6,N6-dimethyllysine; alternate mark. K3 carries the post-translational modification N6-methyllysine; alternate. Residues K5–T240 enclose the tr-type G domain. A G1 region spans residues G14–S21. G14 to S21 contributes to the GTP binding site. The residue at position 30 (K30) is an N6-methyllysine. The tract at residues G70–D74 is G2. K79 carries the post-translational modification N6,N6,N6-trimethyllysine. Residues D91–G94 form a G3 region. GTP is bound by residues D91–H95 and N153–D156. A G4 region spans residues N153–D156. Residues S192–W194 form a G5 region. The residue at position 316 (K316) is an N6,N6-dimethyllysine; alternate. K316 is subject to N6-methyllysine; alternate. The residue at position 390 (K390) is an N6-methyllysine.

This sequence belongs to the TRAFAC class translation factor GTPase superfamily. Classic translation factor GTPase family. EF-Tu/EF-1A subfamily.

It is found in the cytoplasm. Its function is as follows. This protein promotes the GTP-dependent binding of aminoacyl-tRNA to the A-site of ribosomes during protein biosynthesis. This is Elongation factor 1-alpha (TEF) from Eremothecium gossypii (strain ATCC 10895 / CBS 109.51 / FGSC 9923 / NRRL Y-1056) (Yeast).